The sequence spans 360 residues: Peptide chain release factor 1 (360 aa).

Glutamine 235 is subject to N5-methylglutamine. Residues 284-293 (QRRQQEESST) are compositionally biased toward basic and acidic residues. The tract at residues 284 to 311 (QRRQQEESSTRRNLLGSGDRSDRIRTYN) is disordered.

This sequence belongs to the prokaryotic/mitochondrial release factor family. In terms of processing, methylated by PrmC. Methylation increases the termination efficiency of RF1.

It localises to the cytoplasm. Peptide chain release factor 1 directs the termination of translation in response to the peptide chain termination codons UAG and UAA. This is Peptide chain release factor 1 from Sodalis glossinidius (strain morsitans).